A 229-amino-acid polypeptide reads, in one-letter code: Heptaprenylglyceryl phosphate synthase (229 aa).

Residue lysine 12 participates in sn-glycerol 1-phosphate binding. 2 residues coordinate Mg(2+): aspartate 14 and serine 40. Residues 159–164 (YLEYSG), glycine 189, and 209–210 (GN) contribute to the sn-glycerol 1-phosphate site.

This sequence belongs to the GGGP/HepGP synthase family. Group I subfamily. Homodimer. The cofactor is Mg(2+).

It catalyses the reaction sn-glycerol 1-phosphate + all-trans-heptaprenyl diphosphate = 3-heptaprenyl-sn-glycero-1-phosphate + diphosphate. The protein operates within membrane lipid metabolism; glycerophospholipid metabolism. Prenyltransferase that catalyzes in vivo the transfer of the heptaprenyl moiety of heptaprenyl pyrophosphate (HepPP; 35 carbon atoms) to the C3 hydroxyl of sn-glycerol-1-phosphate (G1P), producing heptaprenylglyceryl phosphate (HepGP). This reaction is an ether-bond-formation step in the biosynthesis of archaea-type G1P-based membrane lipids found in Bacillales. The sequence is that of Heptaprenylglyceryl phosphate synthase from Bacillus mycoides (strain KBAB4) (Bacillus weihenstephanensis).